Reading from the N-terminus, the 427-residue chain is Adenylosuccinate synthetase (427 aa).

GTP is bound by residues glycine 12–lysine 18 and glycine 40–threonine 42. Aspartate 13 serves as the catalytic Proton acceptor. Positions 13 and 40 each coordinate Mg(2+). IMP contacts are provided by residues aspartate 13–lysine 16, asparagine 38–histidine 41, threonine 128, arginine 142, glutamine 223, threonine 238, and arginine 302. The active-site Proton donor is histidine 41. Residue threonine 298–arginine 304 coordinates substrate. GTP-binding positions include arginine 304, lysine 330–aspartate 332, and alanine 412–glycine 414.

Belongs to the adenylosuccinate synthetase family. In terms of assembly, homodimer. Mg(2+) is required as a cofactor.

It localises to the cytoplasm. It carries out the reaction IMP + L-aspartate + GTP = N(6)-(1,2-dicarboxyethyl)-AMP + GDP + phosphate + 2 H(+). Its pathway is purine metabolism; AMP biosynthesis via de novo pathway; AMP from IMP: step 1/2. In terms of biological role, plays an important role in the de novo pathway of purine nucleotide biosynthesis. Catalyzes the first committed step in the biosynthesis of AMP from IMP. The sequence is that of Adenylosuccinate synthetase from Desulfitobacterium hafniense (strain DSM 10664 / DCB-2).